The sequence spans 336 residues: Abasic site processing protein HMCES (336 aa).

Cysteine 2 functions as the Nucleophile in the catalytic mechanism. Position 2 is a thiazolidine linkage to a ring-opened DNA abasic site (cysteine 2). Positions 26-51 (RQKCPKWRDGDTDKYQPSYNKSPQSN) are disordered. The segment covering 40 to 51 (YQPSYNKSPQSN) has biased composition (polar residues). The active site involves glutamate 129. Residues 285 to 336 (QNKSPKKEESRSIIQSPKLSQFGAPPKKTSAGLMQQWLKKEDGEPSPKRAKK) are disordered. Residues 322–336 (LKKEDGEPSPKRAKK) are compositionally biased toward basic and acidic residues.

It belongs to the SOS response-associated peptidase family. Post-translationally, ubiquitination of the hmces DNA-protein cross-link by rfwd3 may promotes its degradation.

It is found in the chromosome. Formation and reversal of DNA-protein cross-link depends on DNA context. Catalyzes formation of the thiazolidine linkage in presence of abasic sites in single-stranded DNA. Mediates the reversal of the thiazolidine cross-link in presence of double stranded DNA. In terms of biological role, sensor of abasic sites in single-stranded DNA (ssDNA) required to preserve genome integrity by promoting error-free repair of abasic sites. Acts as an enzyme that recognizes and binds abasic sites in ssDNA at replication forks and chemically modifies the lesion by forming a covalent cross-link with DNA: forms a stable thiazolidine linkage between a ring-opened abasic site and the alpha-amino and sulfhydryl substituents of its N-terminal catalytic cysteine residue. The hmces DNA-protein cross-link is then either reversed or degraded. Hmces is able to catalyze the reversal of its thiazolidine cross-link and cycle between a cross-link and a non-cross-linked state depending on DNA context: mediates self-reversal of the thiazolidine cross-link in double stranded DNA, allowing apex1 to initiate downstream repair of abasic sites. The hmces DNA-protein cross-link can also be degraded by the sprtn metalloprotease following unfolding by the brip1/fancj helicase. Promotes error-free repair of abasic sites by protecting abasic sites from translesion synthesis (TLS) polymerases and endonucleases that are error-prone and would generate mutations and double-strand breaks. Acts as a protease: mediates autocatalytic processing of its N-terminal methionine in order to expose the catalytic cysteine. The HMCES DNA-protein cross-link is then either reversed or degraded. According to a model, the HMCES DNA-protein cross-link. In Xenopus laevis (African clawed frog), this protein is Abasic site processing protein HMCES.